The chain runs to 263 residues: Acyl-[acyl-carrier-protein]--UDP-N-acetylglucosamine O-acyltransferase (263 aa).

This sequence belongs to the transferase hexapeptide repeat family. LpxA subfamily. In terms of assembly, homotrimer.

It is found in the cytoplasm. It carries out the reaction a (3R)-hydroxyacyl-[ACP] + UDP-N-acetyl-alpha-D-glucosamine = a UDP-3-O-[(3R)-3-hydroxyacyl]-N-acetyl-alpha-D-glucosamine + holo-[ACP]. Its pathway is glycolipid biosynthesis; lipid IV(A) biosynthesis; lipid IV(A) from (3R)-3-hydroxytetradecanoyl-[acyl-carrier-protein] and UDP-N-acetyl-alpha-D-glucosamine: step 1/6. In terms of biological role, involved in the biosynthesis of lipid A, a phosphorylated glycolipid that anchors the lipopolysaccharide to the outer membrane of the cell. The polypeptide is Acyl-[acyl-carrier-protein]--UDP-N-acetylglucosamine O-acyltransferase (Stenotrophomonas maltophilia (strain R551-3)).